Here is a 109-residue protein sequence, read N- to C-terminus: Tetracenomycin F2 cyclase (109 aa).

In terms of assembly, homodimer.

The enzyme catalyses tetracenomycin F2 + H(+) = tetracenomycin F1 + H2O. It functions in the pathway antibiotic biosynthesis; tetracenomycin C biosynthesis. Its function is as follows. Catalyzing the conversion of tetracenomycin F2 to tetracenomycin F1. The protein is Tetracenomycin F2 cyclase (tcmI) of Streptomyces glaucescens.